The sequence spans 215 residues: Ras-like GTP-binding protein RHO1 (215 aa).

A30, V31, G32, K33, T34, and C35 together coordinate GTP. T34 contacts Mg(2+). 2 short sequence motifs (switch) span residues 43-54 and 74-93; these read GEIPTAYVPTVF and DTAG…ADSD. T52 contributes to the Mg(2+) binding site. GTP is bound by residues D135 and S166. The segment at 194–215 is disordered; the sequence is VTTQAKSQESTQQKKKSKCLLQ. The span at 195–204 shows a compositional bias: low complexity; the sequence is TTQAKSQEST. The segment covering 206-215 has biased composition (basic residues); the sequence is QKKKSKCLLQ. Cysteine methyl ester is present on C212. C212 carries S-geranylgeranyl cysteine lipidation. A propeptide spans 213–215 (removed in mature form); sequence LLQ.

It belongs to the small GTPase superfamily. Rho family. In terms of assembly, interacts (GTP-bound form) with formin1 (via GBD/FH3 domain); the interaction activates formin1. Interacts (GTP-bound form) with profilin1. Interacts (GDP-bound form and when prenylated) with RhoGDI. Mg(2+) serves as cofactor.

It localises to the cell membrane. The protein resides in the cytoplasm. Its subcellular location is the cytoskeleton. The protein localises to the cell projection. It is found in the phagocytic cup. It localises to the cytoplasmic vesicle. The protein resides in the phagosome. It carries out the reaction GTP + H2O = GDP + phosphate + H(+). With respect to regulation, regulated by guanine nucleotide exchange factors (GEFs) which promote the exchange of bound GDP for free GTP, GTPase activating proteins (GAPs) which increase the GTP hydrolysis activity and GDP dissociation inhibitors which inhibit the dissociation of the nucleotide from the GTPase. Its function is as follows. Small GTPase which cycles between active GTP-bound and inactive GDP-bound states. Involved in actin cytoskeleton remodeling. Regulates phagocytosis by modulating actin cytoskeleton dynamics through the recruitment of formin1 and profilin1 to the phagocytosis nucleation site. This Entamoeba histolytica (strain ATCC 30459 / HM-1:IMSS / ABRM) protein is Ras-like GTP-binding protein RHO1.